The chain runs to 111 residues: Small ribosomal subunit protein bS6 (111 aa).

It belongs to the bacterial ribosomal protein bS6 family.

In terms of biological role, binds together with bS18 to 16S ribosomal RNA. The chain is Small ribosomal subunit protein bS6 from Francisella philomiragia subsp. philomiragia (strain ATCC 25017 / CCUG 19701 / FSC 153 / O#319-036).